A 547-amino-acid polypeptide reads, in one-letter code: Chaperonin GroEL (547 aa).

ATP contacts are provided by residues 30–33 (TLGP), K51, 87–91 (DGTTT), G415, 479–481 (NAA), and D495.

The protein belongs to the chaperonin (HSP60) family. In terms of assembly, forms a cylinder of 14 subunits composed of two heptameric rings stacked back-to-back. Interacts with the co-chaperonin GroES.

It is found in the cytoplasm. It catalyses the reaction ATP + H2O + a folded polypeptide = ADP + phosphate + an unfolded polypeptide.. Together with its co-chaperonin GroES, plays an essential role in assisting protein folding. The GroEL-GroES system forms a nano-cage that allows encapsulation of the non-native substrate proteins and provides a physical environment optimized to promote and accelerate protein folding. The polypeptide is Chaperonin GroEL (Acinetobacter baumannii (strain ACICU)).